A 153-amino-acid chain; its full sequence is MSNQMNTMDIKEILKYLPHRYPFLLIDRVLDFTAGESLHAIKNVTINEPFFVGHFPVAPVMPGVLILEAMAQATGLLAFKTMSSEPSPDVLYYFAGIDNARFKRVVEPGDQLHFEVKMIKERRGIGVFYGEAKVDGELVCSAEIMCARREISK.

His-54 is a catalytic residue.

It belongs to the thioester dehydratase family. FabZ subfamily.

The protein localises to the cytoplasm. The catalysed reaction is a (3R)-hydroxyacyl-[ACP] = a (2E)-enoyl-[ACP] + H2O. Its function is as follows. Involved in unsaturated fatty acids biosynthesis. Catalyzes the dehydration of short chain beta-hydroxyacyl-ACPs and long chain saturated and unsaturated beta-hydroxyacyl-ACPs. The polypeptide is 3-hydroxyacyl-[acyl-carrier-protein] dehydratase FabZ (Shewanella amazonensis (strain ATCC BAA-1098 / SB2B)).